The chain runs to 1092 residues: DNA polymerase II large subunit (1092 aa).

The protein belongs to the archaeal DNA polymerase II family. Heterodimer of a large subunit and a small subunit.

The enzyme catalyses DNA(n) + a 2'-deoxyribonucleoside 5'-triphosphate = DNA(n+1) + diphosphate. It catalyses the reaction Exonucleolytic cleavage in the 3'- to 5'-direction to yield nucleoside 5'-phosphates.. Functionally, possesses two activities: a DNA synthesis (polymerase) and an exonucleolytic activity that degrades single-stranded DNA in the 3'- to 5'-direction. Has a template-primer preference which is characteristic of a replicative DNA polymerase. The sequence is that of DNA polymerase II large subunit (polC) from Methanothermobacter thermautotrophicus (strain ATCC 29096 / DSM 1053 / JCM 10044 / NBRC 100330 / Delta H) (Methanobacterium thermoautotrophicum).